A 540-amino-acid chain; its full sequence is Chaperonin GroEL (540 aa).

ATP-binding positions include 30–33 (TLGP), lysine 51, 87–91 (DGTTT), glycine 415, 479–481 (NAA), and aspartate 495.

This sequence belongs to the chaperonin (HSP60) family. Forms a cylinder of 14 subunits composed of two heptameric rings stacked back-to-back. Interacts with the co-chaperonin GroES.

It is found in the cytoplasm. The catalysed reaction is ATP + H2O + a folded polypeptide = ADP + phosphate + an unfolded polypeptide.. Its function is as follows. Together with its co-chaperonin GroES, plays an essential role in assisting protein folding. The GroEL-GroES system forms a nano-cage that allows encapsulation of the non-native substrate proteins and provides a physical environment optimized to promote and accelerate protein folding. The sequence is that of Chaperonin GroEL from Raoultella ornithinolytica (Klebsiella ornithinolytica).